A 385-amino-acid chain; its full sequence is DNA replication and repair protein RecF (385 aa).

ATP is bound at residue 30 to 37 (GPNGYGKT).

It belongs to the RecF family.

It localises to the cytoplasm. Functionally, the RecF protein is involved in DNA metabolism; it is required for DNA replication and normal SOS inducibility. RecF binds preferentially to single-stranded, linear DNA. It also seems to bind ATP. In Mycobacterium bovis (strain ATCC BAA-935 / AF2122/97), this protein is DNA replication and repair protein RecF.